Consider the following 160-residue polypeptide: E3 ubiquitin ligase complex SCF subunit sconC (160 aa).

The segment at 101-160 (ILAANYLDIKALLDVGCKTVANMIKGKSPEEIRKTFNIQNDFTPEEEDQIRRENEWAEDR) is interaction with the F-box domain of F-box proteins.

The protein belongs to the SKP1 family. In terms of assembly, component of the SCF (SKP1-CUL1-F-box protein) E3 ubiquitin ligase complexes.

The protein operates within protein modification; protein ubiquitination. Functionally, essential component of the SCF (SKP1-CUL1-F-box protein) E3 ubiquitin ligase complexes, which mediate the ubiquitination and subsequent proteasomal degradation of target proteins. Controls sulfur metabolite repression, probably by mediating the inactivation or degradation of the metR transcription factor. The sequence is that of E3 ubiquitin ligase complex SCF subunit sconC (sconC) from Talaromyces marneffei (strain ATCC 18224 / CBS 334.59 / QM 7333) (Penicillium marneffei).